We begin with the raw amino-acid sequence, 322 residues long: Serine/threonine-protein phosphatase PP1 isozyme 6 (322 aa).

Methionine 1 bears the N-acetylmethionine mark. Aspartate 61, histidine 63, aspartate 89, and asparagine 121 together coordinate Mn(2+). The active-site Proton donor is histidine 122. Mn(2+) is bound by residues histidine 170 and histidine 245. Residues 303-322 (GFNNNVPRPGTPPHKGGKGR) are disordered.

Belongs to the PPP phosphatase family. PP-1 subfamily. Mn(2+) is required as a cofactor. As to expression, strongly up-regulated within developing flowers, especially in the tapetum, the developing and mature pollen and in the ovaries.

It is found in the nucleus. Its subcellular location is the cytoplasm. The enzyme catalyses O-phospho-L-seryl-[protein] + H2O = L-seryl-[protein] + phosphate. It carries out the reaction O-phospho-L-threonyl-[protein] + H2O = L-threonyl-[protein] + phosphate. Phosphatase activity is strongly reduced by the protein phosphatase inhibitor 2 (I-2). Serine/threonine-protein phosphatase that possesses phosphatase activity toward para-nitrophenyl phosphate (pNPP) in vitro. This chain is Serine/threonine-protein phosphatase PP1 isozyme 6, found in Arabidopsis thaliana (Mouse-ear cress).